A 409-amino-acid polypeptide reads, in one-letter code: Putative competence-damage inducible protein (409 aa).

The protein belongs to the CinA family.

The polypeptide is Putative competence-damage inducible protein (Clostridium tetani (strain Massachusetts / E88)).